The primary structure comprises 214 residues: Guanylate kinase (214 aa).

The 187-residue stretch at glycine 6–arginine 192 folds into the Guanylate kinase-like domain. Alanine 13–threonine 20 provides a ligand contact to ATP.

Belongs to the guanylate kinase family.

It localises to the cytoplasm. It carries out the reaction GMP + ATP = GDP + ADP. In terms of biological role, essential for recycling GMP and indirectly, cGMP. This is Guanylate kinase from Pseudomonas syringae pv. tomato (strain ATCC BAA-871 / DC3000).